Here is a 234-residue protein sequence, read N- to C-terminus: MAQRSQKSPPPPELAADKAAALRLTPVSRETEARLDAYVALLLQWQAKTNLISPATLPQLWTRHVADSLQLLRLAPDAKTWLDFGSGGGFPGVVLACALAESAGGSVQLVERNVKKAAFLREALRVTGGAGQVILADIGDSVDRFAGQVDCVTARAVAPLHQLIGFAKPLIRQGAKALFLKGQDVDAELTEATKSWKFSPRLHPSLTGGQGWIVELGAVEPQDQSAPTPHGASV.

Positions 85, 90, and 155 each coordinate S-adenosyl-L-methionine.

The protein belongs to the methyltransferase superfamily. RNA methyltransferase RsmG family.

Its subcellular location is the cytoplasm. The catalysed reaction is guanosine(527) in 16S rRNA + S-adenosyl-L-methionine = N(7)-methylguanosine(527) in 16S rRNA + S-adenosyl-L-homocysteine. Its function is as follows. Specifically methylates the N7 position of guanine in position 527 of 16S rRNA. The polypeptide is Ribosomal RNA small subunit methyltransferase G (Rhodopseudomonas palustris (strain BisB18)).